A 272-amino-acid chain; its full sequence is Dermonecrotic toxin StSicTox-betaIF1 (272 aa).

His5 is an active-site residue. The Mg(2+) site is built by Glu25 and Asp27. His41 functions as the Nucleophile in the catalytic mechanism. Intrachain disulfides connect Cys45–Cys51 and Cys47–Cys189. Asp85 provides a ligand contact to Mg(2+).

Belongs to the arthropod phospholipase D family. Class II subfamily. It depends on Mg(2+) as a cofactor. As to expression, expressed by the venom gland.

It is found in the secreted. It catalyses the reaction an N-(acyl)-sphingosylphosphocholine = an N-(acyl)-sphingosyl-1,3-cyclic phosphate + choline. The enzyme catalyses an N-(acyl)-sphingosylphosphoethanolamine = an N-(acyl)-sphingosyl-1,3-cyclic phosphate + ethanolamine. The catalysed reaction is a 1-acyl-sn-glycero-3-phosphocholine = a 1-acyl-sn-glycero-2,3-cyclic phosphate + choline. It carries out the reaction a 1-acyl-sn-glycero-3-phosphoethanolamine = a 1-acyl-sn-glycero-2,3-cyclic phosphate + ethanolamine. Its function is as follows. Dermonecrotic toxins cleave the phosphodiester linkage between the phosphate and headgroup of certain phospholipids (sphingolipid and lysolipid substrates), forming an alcohol (often choline) and a cyclic phosphate. This toxin acts on sphingomyelin (SM). It may also act on ceramide phosphoethanolamine (CPE), lysophosphatidylcholine (LPC) and lysophosphatidylethanolamine (LPE), but not on lysophosphatidylserine (LPS), and lysophosphatidylglycerol (LPG). It acts by transphosphatidylation, releasing exclusively cyclic phosphate products as second products. Induces dermonecrosis, hemolysis, increased vascular permeability, edema, inflammatory response, and platelet aggregation. The protein is Dermonecrotic toxin StSicTox-betaIF1 of Sicarius terrosus (Cave spider).